The chain runs to 210 residues: Putative O-methyltransferase MSMEG_5073/MSMEI_4947 (210 aa).

S-adenosyl-L-methionine-binding positions include valine 37, glutamate 59, 61 to 62 (GT), serine 67, aspartate 85, and valine 86. Aspartate 133 serves as a coordination point for substrate. Aspartate 135 serves as a coordination point for S-adenosyl-L-methionine.

This sequence belongs to the class I-like SAM-binding methyltransferase superfamily. Cation-dependent O-methyltransferase family.

This chain is Putative O-methyltransferase MSMEG_5073/MSMEI_4947, found in Mycolicibacterium smegmatis (strain ATCC 700084 / mc(2)155) (Mycobacterium smegmatis).